The following is a 517-amino-acid chain: Maturase K (517 aa).

Belongs to the intron maturase 2 family. MatK subfamily.

It is found in the plastid. It localises to the chloroplast. Functionally, usually encoded in the trnK tRNA gene intron. Probably assists in splicing its own and other chloroplast group II introns. This chain is Maturase K, found in Acer pseudoplatanus (Sycamore maple).